The following is a 336-amino-acid chain: Glucokinase (336 aa).

12–17 lines the ATP pocket; it reads ADIGGT.

The protein belongs to the bacterial glucokinase family.

The protein resides in the cytoplasm. It catalyses the reaction D-glucose + ATP = D-glucose 6-phosphate + ADP + H(+). The chain is Glucokinase from Helicobacter pylori (strain ATCC 700392 / 26695) (Campylobacter pylori).